The primary structure comprises 86 residues: MKPGIHPEYRKVVFHDTSVDHYFVVGSTLQTDRTIEWEDGQTYPYFTIEVSSESHPFYTGKQRVVQKEGRVANFNRRFAQFGSREG.

The protein belongs to the bacterial ribosomal protein bL31 family. Type B subfamily. Part of the 50S ribosomal subunit.

The protein is Large ribosomal subunit protein bL31B of Vibrio vulnificus (strain CMCP6).